A 102-amino-acid polypeptide reads, in one-letter code: Monothiol glutaredoxin-S1 (102 aa).

The region spanning 1–101 (MEKISNLLED…SLLRRAGAIW (101 aa)) is the Glutaredoxin domain. Residue Cys-21 participates in [2Fe-2S] cluster binding.

This sequence belongs to the glutaredoxin family. CC-type subfamily.

It localises to the cytoplasm. Its function is as follows. May only reduce GSH-thiol disulfides, but not protein disulfides. In Arabidopsis thaliana (Mouse-ear cress), this protein is Monothiol glutaredoxin-S1 (GRXS1).